A 416-amino-acid chain; its full sequence is Serine hydroxymethyltransferase (416 aa).

Residues Leu121 and 125-127 (GHL) each bind (6S)-5,6,7,8-tetrahydrofolate. Lys229 carries the post-translational modification N6-(pyridoxal phosphate)lysine. (6S)-5,6,7,8-tetrahydrofolate is bound by residues Glu245 and 354 to 356 (SPF).

The protein belongs to the SHMT family. In terms of assembly, homodimer. It depends on pyridoxal 5'-phosphate as a cofactor.

The protein resides in the cytoplasm. It carries out the reaction (6R)-5,10-methylene-5,6,7,8-tetrahydrofolate + glycine + H2O = (6S)-5,6,7,8-tetrahydrofolate + L-serine. Its pathway is one-carbon metabolism; tetrahydrofolate interconversion. It functions in the pathway amino-acid biosynthesis; glycine biosynthesis; glycine from L-serine: step 1/1. Functionally, catalyzes the reversible interconversion of serine and glycine with tetrahydrofolate (THF) serving as the one-carbon carrier. This reaction serves as the major source of one-carbon groups required for the biosynthesis of purines, thymidylate, methionine, and other important biomolecules. Also exhibits THF-independent aldolase activity toward beta-hydroxyamino acids, producing glycine and aldehydes, via a retro-aldol mechanism. This is Serine hydroxymethyltransferase from Aliivibrio salmonicida (strain LFI1238) (Vibrio salmonicida (strain LFI1238)).